A 668-amino-acid polypeptide reads, in one-letter code: DNA ligase (668 aa).

NAD(+) contacts are provided by residues 32-36 (DAEYD), 81-82 (SL), and Glu113. The N6-AMP-lysine intermediate role is filled by Lys115. Positions 136, 173, 289, and 313 each coordinate NAD(+). 4 residues coordinate Zn(2+): Cys407, Cys410, Cys425, and Cys431. A BRCT domain is found at 590–668 (ASEQPFAGKT…EEELQQALQG (79 aa)).

This sequence belongs to the NAD-dependent DNA ligase family. LigA subfamily. Mg(2+) is required as a cofactor. It depends on Mn(2+) as a cofactor.

It carries out the reaction NAD(+) + (deoxyribonucleotide)n-3'-hydroxyl + 5'-phospho-(deoxyribonucleotide)m = (deoxyribonucleotide)n+m + AMP + beta-nicotinamide D-nucleotide.. In terms of biological role, DNA ligase that catalyzes the formation of phosphodiester linkages between 5'-phosphoryl and 3'-hydroxyl groups in double-stranded DNA using NAD as a coenzyme and as the energy source for the reaction. It is essential for DNA replication and repair of damaged DNA. This chain is DNA ligase, found in Aeromonas hydrophila subsp. hydrophila (strain ATCC 7966 / DSM 30187 / BCRC 13018 / CCUG 14551 / JCM 1027 / KCTC 2358 / NCIMB 9240 / NCTC 8049).